The primary structure comprises 215 residues: UPF0502 protein YceH (215 aa).

Position 80 is an N6-acetyllysine (Lys80).

Belongs to the UPF0502 family.

This is UPF0502 protein YceH from Shigella boydii serotype 4 (strain Sb227).